Consider the following 198-residue polypeptide: Peptide deformylase (198 aa).

The Fe cation site is built by C123 and H170. E171 is an active-site residue. H174 provides a ligand contact to Fe cation.

This sequence belongs to the polypeptide deformylase family. Fe(2+) serves as cofactor.

It catalyses the reaction N-terminal N-formyl-L-methionyl-[peptide] + H2O = N-terminal L-methionyl-[peptide] + formate. Removes the formyl group from the N-terminal Met of newly synthesized proteins. Requires at least a dipeptide for an efficient rate of reaction. N-terminal L-methionine is a prerequisite for activity but the enzyme has broad specificity at other positions. The protein is Peptide deformylase of Mycoplasmopsis pulmonis (strain UAB CTIP) (Mycoplasma pulmonis).